The following is a 443-amino-acid chain: Tubulin beta chain (443 aa).

Residues glutamine 11, glutamate 69, serine 138, glycine 142, threonine 143, glycine 144, asparagine 204, and asparagine 226 each contribute to the GTP site. A Mg(2+)-binding site is contributed by glutamate 69. Residues 424-443 (QYQDATAEEEGEFEEEEGEN) are disordered. Residues 429–443 (TAEEEGEFEEEEGEN) are compositionally biased toward acidic residues.

The protein belongs to the tubulin family. As to quaternary structure, dimer of alpha and beta chains. A typical microtubule is a hollow water-filled tube with an outer diameter of 25 nm and an inner diameter of 15 nM. Alpha-beta heterodimers associate head-to-tail to form protofilaments running lengthwise along the microtubule wall with the beta-tubulin subunit facing the microtubule plus end conferring a structural polarity. Microtubules usually have 13 protofilaments but different protofilament numbers can be found in some organisms and specialized cells. The cofactor is Mg(2+).

The protein resides in the cytoplasm. It localises to the cytoskeleton. Tubulin is the major constituent of microtubules, a cylinder consisting of laterally associated linear protofilaments composed of alpha- and beta-tubulin heterodimers. Microtubules grow by the addition of GTP-tubulin dimers to the microtubule end, where a stabilizing cap forms. Below the cap, tubulin dimers are in GDP-bound state, owing to GTPase activity of alpha-tubulin. The sequence is that of Tubulin beta chain (BETA-TT1) from Tetrahymena pyriformis.